The primary structure comprises 445 residues: ATPase PAAT (445 aa).

Phosphoserine occurs at positions 177, 182, 254, and 302. The interval 426-445 is disordered; sequence PTGIPLRHYDSGERLSNGER. Basic and acidic residues predominate over residues 432 to 445; it reads RHYDSGERLSNGER.

As to quaternary structure, homodimer. Interacts with ABCB7, ABCB8/MITOSUR and ABCB10.

It localises to the cytoplasm. The protein resides in the mitochondrion. It carries out the reaction ATP + H2O = ADP + phosphate + H(+). Functionally, ATPase that regulates mitochondrial ABC transporters ABCB7, ABCB8/MITOSUR and ABCB10. Regulates mitochondrial ferric concentration and heme biosynthesis and plays a role in the maintenance of mitochondrial homeostasis and cell survival. The sequence is that of ATPase PAAT from Homo sapiens (Human).